The sequence spans 220 residues: MAAAAQTGKKKTVRPGEWKIWLLYAVGFVPAVWTFYLGASGNLGADPVKTFEHTLGLWALRFLILTLMVTPIRDLTGMAFLRYRRALGLLAFYYALMHFATYMVLDQGLNISAIVTDIVRRPFITIGMISLVLLVPLALTSNNWSIRKLGRRWNSLHKLVYVAIAGGAIHFIMSVKSWPAEPVIYAGIVSALLLWRLVRPHARNRKPVSRPRGEAMAVKK.

5 consecutive transmembrane segments (helical) span residues 20-40 (IWLL…LGAS), 52-72 (EHTL…VTPI), 86-106 (ALGL…MVLD), 122-142 (PFIT…LTSN), and 159-179 (LVYV…KSWP).

The protein belongs to the MsrQ family. In terms of assembly, heterodimer of a catalytic subunit (MsrP) and a heme-binding subunit (MsrQ). FMN serves as cofactor. Heme b is required as a cofactor.

The protein resides in the cell inner membrane. Part of the MsrPQ system that repairs oxidized periplasmic proteins containing methionine sulfoxide residues (Met-O), using respiratory chain electrons. Thus protects these proteins from oxidative-stress damage caused by reactive species of oxygen and chlorine generated by the host defense mechanisms. MsrPQ is essential for the maintenance of envelope integrity under bleach stress, rescuing a wide series of structurally unrelated periplasmic proteins from methionine oxidation. MsrQ provides electrons for reduction to the reductase catalytic subunit MsrP, using the quinone pool of the respiratory chain. This Brucella anthropi (strain ATCC 49188 / DSM 6882 / CCUG 24695 / JCM 21032 / LMG 3331 / NBRC 15819 / NCTC 12168 / Alc 37) (Ochrobactrum anthropi) protein is Protein-methionine-sulfoxide reductase heme-binding subunit MsrQ.